The chain runs to 295 residues: Indole-3-glycerol phosphate synthase (295 aa).

It belongs to the TrpC family.

The catalysed reaction is 1-(2-carboxyphenylamino)-1-deoxy-D-ribulose 5-phosphate + H(+) = (1S,2R)-1-C-(indol-3-yl)glycerol 3-phosphate + CO2 + H2O. It participates in amino-acid biosynthesis; L-tryptophan biosynthesis; L-tryptophan from chorismate: step 4/5. This Prochlorococcus marinus (strain MIT 9301) protein is Indole-3-glycerol phosphate synthase.